The primary structure comprises 216 residues: Large ribosomal subunit protein uL3 (216 aa).

At Gln157 the chain carries N5-methylglutamine.

The protein belongs to the universal ribosomal protein uL3 family. In terms of assembly, part of the 50S ribosomal subunit. Forms a cluster with proteins L14 and L19. Post-translationally, methylated by PrmB.

Functionally, one of the primary rRNA binding proteins, it binds directly near the 3'-end of the 23S rRNA, where it nucleates assembly of the 50S subunit. In Xanthomonas campestris pv. campestris (strain 8004), this protein is Large ribosomal subunit protein uL3.